Consider the following 374-residue polypeptide: tRNA (adenine(58)-N(1))-methyltransferase catalytic subunit TRM61 (374 aa).

S-adenosyl-L-methionine is bound by residues serine 120–serine 122, glutamate 138, arginine 143, aspartate 167–valine 168, and aspartate 202.

This sequence belongs to the class I-like SAM-binding methyltransferase superfamily. TRM61 family. In terms of assembly, heterotetramer; composed of two copies of TRM6 and two copies of TRM61.

It is found in the nucleus. It carries out the reaction adenosine(58) in tRNA + S-adenosyl-L-methionine = N(1)-methyladenosine(58) in tRNA + S-adenosyl-L-homocysteine + H(+). Functionally, catalytic subunit of tRNA (adenine-N(1)-)-methyltransferase, which catalyzes the formation of N(1)-methyladenine at position 58 (m1A58) in initiator methionyl-tRNA. This chain is tRNA (adenine(58)-N(1))-methyltransferase catalytic subunit TRM61 (TRM61), found in Candida glabrata (strain ATCC 2001 / BCRC 20586 / JCM 3761 / NBRC 0622 / NRRL Y-65 / CBS 138) (Yeast).